Consider the following 177-residue polypeptide: Transcription antitermination protein NusB (177 aa).

The segment at 1–36 (MTEQPTKPTGSRPPRQPRTGLTSTGARKAGSKSDRS) is disordered.

Belongs to the NusB family.

Functionally, involved in transcription antitermination. Required for transcription of ribosomal RNA (rRNA) genes. Binds specifically to the boxA antiterminator sequence of the ribosomal RNA (rrn) operons. The protein is Transcription antitermination protein NusB of Albidiferax ferrireducens (strain ATCC BAA-621 / DSM 15236 / T118) (Rhodoferax ferrireducens).